A 505-amino-acid chain; its full sequence is Trans-cinnamate 4-monooxygenase C4H2 (505 aa).

2 consecutive short sequence motifs (nuclear localization signal) follow at residues Val161 to Asn168 and Glu247 to Lys254. Cys447 contributes to the heme binding site.

This sequence belongs to the cytochrome P450 family. The cofactor is heme.

The protein localises to the nucleus. The enzyme catalyses (E)-cinnamate + reduced [NADPH--hemoprotein reductase] + O2 = (E)-4-coumarate + oxidized [NADPH--hemoprotein reductase] + H2O + H(+). The protein operates within phenylpropanoid metabolism; trans-4-coumarate biosynthesis; trans-4-coumarate from trans-cinnamate: step 1/1. In terms of biological role, component of the floral volatile benzenoid/phenylpropanoid (FVBP) biosynthetic pathway that controls carbon flux to pigments essential for pollination or UV protection, to numerous pytoalexins synthesized by plants when challenged by pathogens, and to lignins. The polypeptide is Trans-cinnamate 4-monooxygenase C4H2 (Petunia hybrida (Petunia)).